We begin with the raw amino-acid sequence, 820 residues long: Phenylalanine--tRNA ligase beta subunit (820 aa).

The region spanning 42 to 154 is the tRNA-binding domain; it reads KGGLEGLVIG…EDAVPGTLAK (113 aa). Positions 413 to 489 constitute a B5 domain; that stretch reads AQDFIVELTY…RIYGYNNVEI (77 aa). Mg(2+) contacts are provided by Asp467, Asp473, Glu476, and Asp477. One can recognise an FDX-ACB domain in the interval 727–820; sequence SKFPAVKRDL…LEDKLGAKLR (94 aa).

The protein belongs to the phenylalanyl-tRNA synthetase beta subunit family. Type 1 subfamily. As to quaternary structure, tetramer of two alpha and two beta subunits. Mg(2+) is required as a cofactor.

The protein resides in the cytoplasm. The catalysed reaction is tRNA(Phe) + L-phenylalanine + ATP = L-phenylalanyl-tRNA(Phe) + AMP + diphosphate + H(+). This Bacteroides fragilis (strain ATCC 25285 / DSM 2151 / CCUG 4856 / JCM 11019 / LMG 10263 / NCTC 9343 / Onslow / VPI 2553 / EN-2) protein is Phenylalanine--tRNA ligase beta subunit.